The chain runs to 220 residues: Probable GTP-binding protein EngB (220 aa).

The EngB-type G domain maps to 26–200; sequence EGIEIAFAGR…RAKLDEWYAP (175 aa). Residues 34–41, 61–65, 79–82, 146–149, and 179–181 contribute to the GTP site; these read GRSNTGKS, GRTQL, DLPG, TKAD, and FSS. S41 and T63 together coordinate Mg(2+).

Belongs to the TRAFAC class TrmE-Era-EngA-EngB-Septin-like GTPase superfamily. EngB GTPase family. Mg(2+) serves as cofactor.

Necessary for normal cell division and for the maintenance of normal septation. The chain is Probable GTP-binding protein EngB from Vibrio cholerae serotype O1 (strain ATCC 39541 / Classical Ogawa 395 / O395).